Reading from the N-terminus, the 462-residue chain is Putative F-box protein At1g12855 (462 aa).

Basic and acidic residues predominate over residues 1-22 (MESREDSFISKEKKSTMKKEKQ). The disordered stretch occupies residues 1–59 (MESREDSFISKEKKSTMKKEKQAIASQRNRRRVIKNRGNGKRLIASLSQRKRRRIPRGR). Basic residues predominate over residues 28–40 (RNRRRVIKNRGNG). Positions 65 to 110 (VFAPSSLPNDVVEEIFLRLPVKAIIQLKSLSKQWRSTIESRSFEER) constitute an F-box domain.

This is Putative F-box protein At1g12855 from Arabidopsis thaliana (Mouse-ear cress).